Reading from the N-terminus, the 119-residue chain is RIIa domain-containing protein 1 (119 aa).

The region spanning 70–104 (KEVSLLISGFFREMFLKRPDNILEFAAHYFTDPRL) is the RIIa domain.

Abundant in tissues rich in highly ciliated cells, such as testis, trachea and olfactory epithelium.

This Mus musculus (Mouse) protein is RIIa domain-containing protein 1 (Riiad1).